The primary structure comprises 300 residues: UDP-3-O-acyl-N-acetylglucosamine deacetylase (300 aa).

Zn(2+) is bound by residues H78, H237, and D241. The active-site Proton donor is the H264.

Belongs to the LpxC family. It depends on Zn(2+) as a cofactor.

It catalyses the reaction a UDP-3-O-[(3R)-3-hydroxyacyl]-N-acetyl-alpha-D-glucosamine + H2O = a UDP-3-O-[(3R)-3-hydroxyacyl]-alpha-D-glucosamine + acetate. It functions in the pathway glycolipid biosynthesis; lipid IV(A) biosynthesis; lipid IV(A) from (3R)-3-hydroxytetradecanoyl-[acyl-carrier-protein] and UDP-N-acetyl-alpha-D-glucosamine: step 2/6. Catalyzes the hydrolysis of UDP-3-O-myristoyl-N-acetylglucosamine to form UDP-3-O-myristoylglucosamine and acetate, the committed step in lipid A biosynthesis. This is UDP-3-O-acyl-N-acetylglucosamine deacetylase from Acinetobacter baumannii (strain SDF).